The sequence spans 542 residues: Keratin, type II cytoskeletal 75 (542 aa).

The segment covering 1-26 (MSRQSTVTFHSGSRRGFSTASATTPT) has biased composition (polar residues). A disordered region spans residues 1–44 (MSRQSTVTFHSGSRRGFSTASATTPTAGRSRFSSVSVARSSGNS). The head stretch occupies residues 1-139 (MSRQSTVTFH…DPTIQRVRKE (139 aa)). The segment covering 27 to 42 (AGRSRFSSVSVARSSG) has biased composition (low complexity). Residues 140 to 175 (EREQIKTLNNKFASFIDKVRFLEQQNKVLETKWNLL) form a coil 1A region. The IF rod domain maps to 140–453 (EREQIKTLNN…KLLEGEECRL (314 aa)). The segment at 176-194 (QEQGSRTVRQNLEPFFDAY) is linker 1. The coil 1B stretch occupies residues 195–287 (VNDLRRQLDS…VYEAELSQMQ (93 aa)). Residues 288 to 310 (NQVSDTSVVLSMDNNRSLDLDSI) are linker 12. The coil 2 stretch occupies residues 311 to 449 (IAEVKAQYED…ATYRKLLEGE (139 aa)). The segment at 450 to 542 (ECRLSGEGVS…TSSSRKSYKH (93 aa)) is tail. A disordered region spans residues 514-542 (TSSSRGPVGSGSSIKFVSSTSSSRKSYKH).

The protein belongs to the intermediate filament family. Heterodimer of a type I and a type II keratin. May associate with KRT17.

Its function is as follows. Plays a central role in hair and nail formation. Essential component of keratin intermediate filaments in the companion layer of the hair follicle. This Rattus norvegicus (Rat) protein is Keratin, type II cytoskeletal 75 (Krt75).